The following is a 181-amino-acid chain: MSFQEVWEKEPMKKPRIQKVTVNFGVGEAGDRLTIGAKVIETLTGQAPVRTLAKQTNPAFGIRKKLPIGLKVTLRGKNAEEFLENAFVAFKVSGKVLYASSFDKVGNFSFGVPEHIDFPGQKYDPTVGIYGMDICVTFEKPGYRVKSRKLKRSHIPAKHLVKKEEAIEYIEKKFGAEVVME.

It belongs to the universal ribosomal protein uL5 family. Part of the 50S ribosomal subunit; contacts the 5S rRNA and probably tRNA. Forms a bridge to the 30S subunit in the 70S ribosome.

Functionally, this is one of the proteins that bind and probably mediate the attachment of the 5S RNA into the large ribosomal subunit, where it forms part of the central protuberance. In the 70S ribosome it contacts protein S13 of the 30S subunit (bridge B1b), connecting the 2 subunits; this bridge is implicated in subunit movement. May contact the P site tRNA; the 5S rRNA and some of its associated proteins might help stabilize positioning of ribosome-bound tRNAs. This chain is Large ribosomal subunit protein uL5, found in Methanococcus vannielii.